Reading from the N-terminus, the 110-residue chain is Large ribosomal subunit protein uL22 (110 aa).

It belongs to the universal ribosomal protein uL22 family. As to quaternary structure, part of the 50S ribosomal subunit.

In terms of biological role, this protein binds specifically to 23S rRNA; its binding is stimulated by other ribosomal proteins, e.g. L4, L17, and L20. It is important during the early stages of 50S assembly. It makes multiple contacts with different domains of the 23S rRNA in the assembled 50S subunit and ribosome. Its function is as follows. The globular domain of the protein is located near the polypeptide exit tunnel on the outside of the subunit, while an extended beta-hairpin is found that lines the wall of the exit tunnel in the center of the 70S ribosome. The protein is Large ribosomal subunit protein uL22 of Teredinibacter turnerae (strain ATCC 39867 / T7901).